Reading from the N-terminus, the 357-residue chain is Red-sensitive opsin-1 (357 aa).

The Extracellular segment spans residues 1–49; the sequence is MAEHWGDAIYAARRKGDETTREAMFTYTNSNNTKDPFEGPNYHIAPRWV. N-linked (GlcNAc...) asparagine glycosylation is present at N31. Residues 50–74 form a helical membrane-spanning segment; sequence YNVATVWMFFVVVASTFTNGLVLVA. Topologically, residues 75-86 are cytoplasmic; sequence TAKFKKLRHPLN. Residues 87–112 traverse the membrane as a helical segment; it reads WILVNLAIADLGETLFASTISVINQF. Residues 113–126 lie on the Extracellular side of the membrane; that stretch reads FGYFILGHPMCIFE. Cysteines 123 and 200 form a disulfide. The chain crosses the membrane as a helical span at residues 127–146; the sequence is GYTVSVCGIAALWSLTVISW. The Cytoplasmic segment spans residues 147-165; sequence ERWVVVCKPFGNVKFDAKW. The chain crosses the membrane as a helical span at residues 166–189; it reads ASAGIIFSWVWAAAWCAPPIFGWS. The Extracellular portion of the chain corresponds to 190–215; the sequence is RYWPHGLKTSCGPDVFSGSEDPGVQS. The chain crosses the membrane as a helical span at residues 216–243; the sequence is YMVVLMITCCIIPLAIIILCYIAVYLAI. The Cytoplasmic segment spans residues 244–265; sequence HAVAQQQKDSESTQKAEKEVSR. Residues 266 to 289 traverse the membrane as a helical segment; it reads MVVVMIFAYCFCWGPYTFFACFAA. The Extracellular portion of the chain corresponds to 290 to 297; it reads ANPGYAFH. Residues 298–322 form a helical membrane-spanning segment; that stretch reads PLAAAMPAYFAKSATIYNPVIYVFM. N6-(retinylidene)lysine is present on K309. Residues 323–357 lie on the Cytoplasmic side of the membrane; that stretch reads NRQFRVCIMQLFGKKVDDGSEVSTSKTEVSSVAPA.

Belongs to the G-protein coupled receptor 1 family. Opsin subfamily. Phosphorylated on some or all of the serine and threonine residues present in the C-terminal region. As to expression, retinal double cone principal photoreceptor cell outer segments.

Its subcellular location is the membrane. Its function is as follows. Visual pigments are the light-absorbing molecules that mediate vision. They consist of an apoprotein, opsin, covalently linked to cis-retinal. The polypeptide is Red-sensitive opsin-1 (opn1lw1) (Danio rerio (Zebrafish)).